The primary structure comprises 318 residues: Protein disulfide-isomerase MPD1 (318 aa).

An N-terminal signal peptide occupies residues 1 to 21; sequence MLFLNIIKLLLGLFIMNEVKA. The region spanning 22 to 158 is the Thioredoxin domain; that stretch reads QNFYDSDPHI…SLSRIRSYVK (137 aa). N-linked (GlcNAc...) asparagine glycosylation is present at Asn-47. The cysteines at positions 59 and 62 are disulfide-linked. Residue Asn-307 is glycosylated (N-linked (GlcNAc...) asparagine). Residues 315-318 carry the Prevents secretion from ER motif; it reads HDEL.

It belongs to the protein disulfide isomerase family. Interacts with CNE1 and EPS1.

Its subcellular location is the endoplasmic reticulum lumen. It catalyses the reaction Catalyzes the rearrangement of -S-S- bonds in proteins.. In terms of biological role, participates in the folding of proteins containing disulfide bonds. The protein is Protein disulfide-isomerase MPD1 (MPD1) of Saccharomyces cerevisiae (strain ATCC 204508 / S288c) (Baker's yeast).